A 124-amino-acid polypeptide reads, in one-letter code: Small ribosomal subunit protein bS16 (124 aa).

Residues Ala-80–Glu-124 form a disordered region. Residues Lys-99–Glu-113 show a composition bias toward basic and acidic residues. Low complexity predominate over residues Ala-114–Glu-124.

It belongs to the bacterial ribosomal protein bS16 family.

This is Small ribosomal subunit protein bS16 from Rhizobium meliloti (strain 1021) (Ensifer meliloti).